Consider the following 202-residue polypeptide: MIMQKILLATSNRHKYLEFSRLLYPLTLEALPEDLKRLLPNETAKSYRDNAKLKGMALSEIYEGFVLADDSGLEVFSLHGEPGIFSSRYAGEGSSAQENIDKLLKNLQSKNITDRRARFVCALVLVKKKKILFETTAFCYGIIADRQKGGGGFGYDPIFIPEGYSLTMAELDEKQKDLVSHRGKACQELKAFFLENRMEGHS.

10-15 (TSNRHK) serves as a coordination point for substrate. Aspartate 70 functions as the Proton acceptor in the catalytic mechanism. Aspartate 70 contributes to the Mg(2+) binding site. Substrate-binding positions include serine 71, 153–156 (FGYD), lysine 176, and 181–182 (HR).

Belongs to the HAM1 NTPase family. As to quaternary structure, homodimer. Mg(2+) is required as a cofactor.

The enzyme catalyses XTP + H2O = XMP + diphosphate + H(+). It catalyses the reaction dITP + H2O = dIMP + diphosphate + H(+). It carries out the reaction ITP + H2O = IMP + diphosphate + H(+). Its function is as follows. Pyrophosphatase that catalyzes the hydrolysis of nucleoside triphosphates to their monophosphate derivatives, with a high preference for the non-canonical purine nucleotides XTP (xanthosine triphosphate), dITP (deoxyinosine triphosphate) and ITP. Seems to function as a house-cleaning enzyme that removes non-canonical purine nucleotides from the nucleotide pool, thus preventing their incorporation into DNA/RNA and avoiding chromosomal lesions. This chain is dITP/XTP pyrophosphatase, found in Methylacidiphilum infernorum (isolate V4) (Methylokorus infernorum (strain V4)).